Reading from the N-terminus, the 1163-residue chain is AF4/FMR2 family member 4 (1163 aa).

Positions Met-1–Gln-19 are enriched in basic and acidic residues. Disordered stretches follow at residues Met-1–Leu-48, Ala-76–Asp-312, Thr-324–Thr-904, and Asn-1034–Ala-1073. Positions Pro-115–Gln-128 are enriched in polar residues. Ser-120 carries the post-translational modification Phosphoserine. Low complexity-rich tracts occupy residues Ser-129 to Gly-148 and Arg-177 to His-194. Residues His-198–Asp-217 show a composition bias toward basic and acidic residues. Residue Ser-212 is modified to Phosphoserine. Composition is skewed to polar residues over residues Pro-227–Gln-251, Glu-273–Thr-285, and Lys-350–Gln-375. Phosphoserine occurs at positions 387, 388, 389, and 392. The span at Pro-403–Glu-412 shows a compositional bias: polar residues. Residues Pro-413–Ser-429 are compositionally biased toward basic and acidic residues. The segment covering Ser-430 to Pro-462 has biased composition (low complexity). 3 positions are modified to phosphoserine: Ser-487, Ser-490, and Ser-491. 3 stretches are compositionally biased toward polar residues: residues Pro-488 to Gly-501, Gly-510 to Thr-528, and Ser-549 to Arg-560. A Phosphoserine modification is found at Ser-549. The segment covering Lys-568–Ser-586 has biased composition (basic and acidic residues). Residue Lys-583 forms a Glycyl lysine isopeptide (Lys-Gly) (interchain with G-Cter in SUMO2) linkage. The span at Ser-599–Asn-612 shows a compositional bias: basic residues. Over residues Ile-613–Lys-627 the composition is skewed to basic and acidic residues. Position 671 is a phosphoserine (Ser-671). A Phosphothreonine modification is found at Thr-674. 4 positions are modified to phosphoserine: Ser-680, Ser-694, Ser-703, and Ser-706. Residue Tyr-712 is modified to Phosphotyrosine. Basic and acidic residues-rich tracts occupy residues Pro-730–Ser-761, Lys-769–Ser-789, and Glu-799–Leu-811. Ser-814 bears the Phosphoserine mark. Lys-822 carries the post-translational modification N6-acetyllysine. Ser-836, Ser-1043, Ser-1055, Ser-1058, and Ser-1062 each carry phosphoserine. The span at Ser-836–Ser-862 shows a compositional bias: low complexity. The segment covering Ser-1062–Ala-1073 has biased composition (low complexity).

Belongs to the AF4 family. In terms of assembly, component of the super elongation complex (SEC), at least composed of EAF1, EAF2, CDK9, MLLT3/AF9, AFF (AFF1 or AFF4), the P-TEFb complex and ELL (ELL, ELL2 or ELL3). Interacts with ELL3; the interaction is direct. Interacts with ELL2; the interaction is direct and leads to stabilize ELL2 and prevent ELL2 ubiquitination and degradation. Dephosphorylated at Ser-549 by the PNUTS-PP1 complex, promoting RNA polymerase II transcription pause-release. In terms of tissue distribution, ubiquitously expressed. Strongly expressed in heart, placenta, skeletal muscle, pancreas and to a lower extent in brain.

The protein localises to the nucleus. It is found in the chromosome. Its function is as follows. Key component of the super elongation complex (SEC), a complex required to increase the catalytic rate of RNA polymerase II transcription by suppressing transient pausing by the polymerase at multiple sites along the DNA. In the SEC complex, AFF4 acts as a central scaffold that recruits other factors through direct interactions with ELL proteins (ELL, ELL2 or ELL3) and the P-TEFb complex. In case of infection by HIV-1 virus, the SEC complex is recruited by the viral Tat protein to stimulate viral gene expression. The protein is AF4/FMR2 family member 4 (AFF4) of Homo sapiens (Human).